The sequence spans 296 residues: Cytidine deaminase (296 aa).

CMP/dCMP-type deaminase domains follow at residues 48 to 168 and 187 to 296; these read DADA…FGPV and QNMN…FIEE. A substrate-binding site is contributed by 89 to 91; the sequence is NME. Histidine 102 contributes to the Zn(2+) binding site. Glutamate 104 (proton donor) is an active-site residue. Zn(2+) contacts are provided by cysteine 129 and cysteine 132.

Belongs to the cytidine and deoxycytidylate deaminase family. As to quaternary structure, homodimer. Zn(2+) is required as a cofactor.

The enzyme catalyses cytidine + H2O + H(+) = uridine + NH4(+). It carries out the reaction 2'-deoxycytidine + H2O + H(+) = 2'-deoxyuridine + NH4(+). In terms of biological role, this enzyme scavenges exogenous and endogenous cytidine and 2'-deoxycytidine for UMP synthesis. This chain is Cytidine deaminase, found in Pectobacterium carotovorum subsp. carotovorum (strain PC1).